We begin with the raw amino-acid sequence, 189 residues long: Mediator of RNA polymerase II transcription subunit 28 (189 aa).

Residues 75 to 115 (YMLIKDENQDLSIEIQRKEALLQKHYNRLEEWKACLSDIQQ) adopt a coiled-coil conformation. The disordered stretch occupies residues 124–147 (PIGSGMLQGPGGGMPPMGGTPPRP). The segment covering 129–139 (MLQGPGGGMPP) has biased composition (gly residues).

It belongs to the Mediator complex subunit 28 family. As to quaternary structure, component of the Mediator complex, which includes at least CDK8, MED4, MED6, MED11, MED14, MED17, MED18, MED20, MED21, MED22, MED27, MED28, MED30 and MED31.

The protein resides in the nucleus. Its function is as follows. Component of the Mediator complex, a coactivator involved in the regulated transcription of nearly all RNA polymerase II-dependent genes. Mediator functions as a bridge to convey information from gene-specific regulatory proteins to the basal RNA polymerase II transcription machinery. Mediator is recruited to promoters by direct interactions with regulatory proteins and serves as a scaffold for the assembly of a functional preinitiation complex with RNA polymerase II and the general transcription factors. In Drosophila melanogaster (Fruit fly), this protein is Mediator of RNA polymerase II transcription subunit 28 (MED28).